We begin with the raw amino-acid sequence, 79 residues long: Exodeoxyribonuclease 7 small subunit (79 aa).

The protein belongs to the XseB family. As to quaternary structure, heterooligomer composed of large and small subunits.

It localises to the cytoplasm. The catalysed reaction is Exonucleolytic cleavage in either 5'- to 3'- or 3'- to 5'-direction to yield nucleoside 5'-phosphates.. Bidirectionally degrades single-stranded DNA into large acid-insoluble oligonucleotides, which are then degraded further into small acid-soluble oligonucleotides. This chain is Exodeoxyribonuclease 7 small subunit, found in Lactococcus lactis subsp. cremoris (strain MG1363).